Consider the following 215-residue polypeptide: MSEAKRLAAEKAIEYVEDGMIVGVGTGSTVAYFIDALARIQHRIKGAVSSSEQSTARLKQHGIEVIELNHSGNLSLYVDGADECDANKCLIKGGGAALTREKIIAEASERFICIIDPSKQVPVLGRFPLPVEVIPMARSLVARQIRDMTGGQPTWREGVVTDNGNQILDIHNLQITDPEKLERELNQLPGVVCVGLFARRRADVVIVGGEPPVVL.

Residues Thr-26–Thr-29, Asp-79–Asp-82, and Lys-92–Gly-95 each bind substrate. Glu-101 (proton acceptor) is an active-site residue. Lys-119 is a binding site for substrate.

This sequence belongs to the ribose 5-phosphate isomerase family. In terms of assembly, homodimer.

It catalyses the reaction aldehydo-D-ribose 5-phosphate = D-ribulose 5-phosphate. It functions in the pathway carbohydrate degradation; pentose phosphate pathway; D-ribose 5-phosphate from D-ribulose 5-phosphate (non-oxidative stage): step 1/1. Its function is as follows. Catalyzes the reversible conversion of ribose-5-phosphate to ribulose 5-phosphate. In Stenotrophomonas maltophilia (strain K279a), this protein is Ribose-5-phosphate isomerase A.